A 1297-amino-acid chain; its full sequence is Phosphoribosylformylglycinamidine synthase (1297 aa).

ATP-binding positions include 307–318 (GASTGSGGEIRD) and Ala678. Glu718, Asn722, and Asp886 together coordinate Mg(2+). The Glutamine amidotransferase type-1 domain maps to 1044–1297 (MAILREQGVN…MFQNARKNLG (254 aa)). Cys1137 functions as the Nucleophile in the catalytic mechanism. Residues His1262 and Glu1264 contribute to the active site.

The protein in the N-terminal section; belongs to the FGAMS family. Monomer.

It is found in the cytoplasm. It catalyses the reaction N(2)-formyl-N(1)-(5-phospho-beta-D-ribosyl)glycinamide + L-glutamine + ATP + H2O = 2-formamido-N(1)-(5-O-phospho-beta-D-ribosyl)acetamidine + L-glutamate + ADP + phosphate + H(+). Its pathway is purine metabolism; IMP biosynthesis via de novo pathway; 5-amino-1-(5-phospho-D-ribosyl)imidazole from N(2)-formyl-N(1)-(5-phospho-D-ribosyl)glycinamide: step 1/2. Its function is as follows. Phosphoribosylformylglycinamidine synthase involved in the purines biosynthetic pathway. Catalyzes the ATP-dependent conversion of formylglycinamide ribonucleotide (FGAR) and glutamine to yield formylglycinamidine ribonucleotide (FGAM) and glutamate. In Vibrio vulnificus (strain CMCP6), this protein is Phosphoribosylformylglycinamidine synthase.